The sequence spans 311 residues: Iron-binding protein YfeA (311 aa).

Residues 1-31 (MIERLNSPFLRAAALFTIVAFSSLISTAALA) form the signal peptide. 4 residues coordinate Fe(2+): histidine 76, histidine 141, glutamate 207, and aspartate 282.

The protein belongs to the bacterial solute-binding protein 9 family. As to quaternary structure, monomer.

It localises to the periplasm. Its function is as follows. Part of the ATP-binding cassette (ABC) transport system YfeABC involved in iron import. Binds iron with high affinity and specificity and delivers it to the membrane permease for translocation into the cytoplasm. Also binds Mn(2+) and Zn(2+). In Yersinia pestis, this protein is Iron-binding protein YfeA (yfeA).